We begin with the raw amino-acid sequence, 474 residues long: Methylenetetrahydrofolate--tRNA-(uracil-5-)-methyltransferase TrmFO (474 aa).

Residue 9–14 participates in FAD binding; sequence GGGLAG. The tract at residues 425-451 is disordered; sequence PPLERMPRNETGKRLRGPEKAALKKRA. Residues 429–451 show a composition bias toward basic and acidic residues; it reads RMPRNETGKRLRGPEKAALKKRA.

This sequence belongs to the MnmG family. TrmFO subfamily. FAD serves as cofactor.

It is found in the cytoplasm. The catalysed reaction is uridine(54) in tRNA + (6R)-5,10-methylene-5,6,7,8-tetrahydrofolate + NADH + H(+) = 5-methyluridine(54) in tRNA + (6S)-5,6,7,8-tetrahydrofolate + NAD(+). It carries out the reaction uridine(54) in tRNA + (6R)-5,10-methylene-5,6,7,8-tetrahydrofolate + NADPH + H(+) = 5-methyluridine(54) in tRNA + (6S)-5,6,7,8-tetrahydrofolate + NADP(+). Functionally, catalyzes the folate-dependent formation of 5-methyl-uridine at position 54 (M-5-U54) in all tRNAs. This Methylorubrum populi (strain ATCC BAA-705 / NCIMB 13946 / BJ001) (Methylobacterium populi) protein is Methylenetetrahydrofolate--tRNA-(uracil-5-)-methyltransferase TrmFO.